Consider the following 223-residue polypeptide: Golgi SNAP receptor complex member 1 (223 aa).

Residue Ser-2 is modified to N-acetylserine. Residues 2 to 204 (SSQPSFVTIR…MKINTRRKKN (203 aa)) lie on the Cytoplasmic side of the membrane. Residue Ser-164 is modified to Phosphoserine. A helical; Anchor for type IV membrane protein membrane pass occupies residues 205 to 222 (AFVLATITTLCILFLFFT). Trp-223 is a topological domain (vesicular).

The protein belongs to the GOSR1 family. Component of several multiprotein Golgi SNARE complexes. Identified in a Golgi SNARE complex consisting of t-SNARES SED5, YKT6, and the v-SNARE SFT1. Interacts with BET1. Interacts with BOS1. Interacts with SEC22. Interacts with PEP12. Interacts with self.

The protein resides in the golgi apparatus membrane. Its function is as follows. Involved in transport from the ER to the Golgi apparatus as well as in intra-Golgi transport. It belongs to a super-family of proteins called t-SNAREs or soluble NSF (N-ethylmaleimide-sensitive factor) attachment protein receptor. Rescues alpha-factor maturation defects. The polypeptide is Golgi SNAP receptor complex member 1 (GOS1) (Saccharomyces cerevisiae (strain ATCC 204508 / S288c) (Baker's yeast)).